Here is a 328-residue protein sequence, read N- to C-terminus: uncharacterized protein (328 aa).

This is an uncharacterized protein from Bacillus anthracis.